The primary structure comprises 316 residues: Phospho-N-acetylmuramoyl-pentapeptide-transferase (316 aa).

A run of 10 helical transmembrane segments spans residues 5 to 25 (IILA…LFIP), 49 to 69 (GTPT…TLIF), 76 to 96 (LAIL…DDFL), 116 to 136 (FLLA…EVIF), 141 to 161 (TTID…VGTV), 172 to 192 (GLAA…ALFL), 195 to 212 (ITYG…LGFL), 221 to 241 (IFMG…AAVL), 244 to 264 (LPLI…SVII), and 296 to 316 (VVYA…YSLS).

Belongs to the glycosyltransferase 4 family. MraY subfamily. It depends on Mg(2+) as a cofactor.

It is found in the cell membrane. The catalysed reaction is UDP-N-acetyl-alpha-D-muramoyl-L-alanyl-gamma-D-glutamyl-meso-2,6-diaminopimeloyl-D-alanyl-D-alanine + di-trans,octa-cis-undecaprenyl phosphate = di-trans,octa-cis-undecaprenyl diphospho-N-acetyl-alpha-D-muramoyl-L-alanyl-D-glutamyl-meso-2,6-diaminopimeloyl-D-alanyl-D-alanine + UMP. It participates in cell wall biogenesis; peptidoglycan biosynthesis. Its function is as follows. Catalyzes the initial step of the lipid cycle reactions in the biosynthesis of the cell wall peptidoglycan: transfers peptidoglycan precursor phospho-MurNAc-pentapeptide from UDP-MurNAc-pentapeptide onto the lipid carrier undecaprenyl phosphate, yielding undecaprenyl-pyrophosphoryl-MurNAc-pentapeptide, known as lipid I. This Thermoanaerobacter pseudethanolicus (strain ATCC 33223 / 39E) (Clostridium thermohydrosulfuricum) protein is Phospho-N-acetylmuramoyl-pentapeptide-transferase.